The sequence spans 103 residues: MATYAIVKTGGKQYKVAAGDVVKVEKLDSEPGASVSLPVALVVDGANVTSKADDLAKVAVTAEVLEHTKGPKIRIHKFKNKTGYHKRQGHRQQLTVLKVTGIK.

It belongs to the bacterial ribosomal protein bL21 family. As to quaternary structure, part of the 50S ribosomal subunit. Contacts protein L20.

In terms of biological role, this protein binds to 23S rRNA in the presence of protein L20. This chain is Large ribosomal subunit protein bL21, found in Mycolicibacterium smegmatis (strain ATCC 700084 / mc(2)155) (Mycobacterium smegmatis).